A 637-amino-acid chain; its full sequence is Serine protease Hayan (637 aa).

An N-terminal signal peptide occupies residues 1–26 (MAMISARRYFLLGLLVLTTSAYVTVG). The Clip domain occupies 31-79 (PCQVRSDIPGICLSSSACENIRGYLKSGTLSTSQVPSCGFGAREEIICC). Cystine bridges form between C32/C78, C42/C68, and C48/C79. 4 disordered regions span residues 95–137 (FHAT…LDEN), 152–178 (KPQKTHESLKLPTQESMKTPTHESMKM), 216–260 (QRSF…NNNN), and 286–365 (LQTT…EKER). The span at 125–136 (EGKRERESRLDE) shows a compositional bias: basic and acidic residues. The span at 234–244 (PLTTPRSRPQR) shows a compositional bias: polar residues. Positions 245–260 (PNNSNFNTNPSPNNNN) are enriched in low complexity. The segment covering 306–320 (EPYRFRGQDRDKDTQ) has biased composition (basic and acidic residues). Over residues 321–332 (PQEPWNDVSNNL) the composition is skewed to polar residues. Disulfide bonds link C371-C497, C414-C430, C543-C567, and C578-C609. In terms of domain architecture, Peptidase S1 spans 385–632 (ILDGERVDRG…FLDYIEGIVW (248 aa)). Catalysis depends on charge relay system residues H429 and D477. The active-site Charge relay system is S582.

It belongs to the peptidase S1 family. CLIP subfamily.

The protein localises to the secreted. Serine protease which, by converting prophenoloxidase 1 (PPO1) into its active form, plays an essential role in the melanization immune response to physical or septic wounding. May function in diverse PPO1-activating cascades that are negatively controlled by different serpin proteins; Spn27A and Spn28D in the hemolymph, and Spn28D and Spn77BA in the trachea. Also required in the systematic wound response by mediating the redox-dependent activation of the JNK cytoprotective cascade in neuronal tissues after integument wounding. The sequence is that of Serine protease Hayan from Drosophila melanogaster (Fruit fly).